Reading from the N-terminus, the 262-residue chain is Snake venom serine protease catroxase-1 (262 aa).

A signal peptide spans 1–18; it reads MVLIRVLANLLILQLSYA. Residues 19–24 constitute a propeptide that is removed on maturation; it reads QKSSEP. Residues 25–250 form the Peptidase S1 domain; the sequence is IIGGDECNRN…HLDWIQSIIA (226 aa). 6 disulfide bridges follow: C31–C162, C49–C65, C97–C257, C141–C211, C173–C190, and C201–C226. Catalysis depends on H64, which acts as the Charge relay system. N102 carries N-linked (GlcNAc...) asparagine glycosylation. The active-site Charge relay system is D109. N169 carries N-linked (GlcNAc...) asparagine glycosylation. The Charge relay system role is filled by S205.

This sequence belongs to the peptidase S1 family. Snake venom subfamily. Monomer. As to expression, expressed by the venom gland.

It is found in the secreted. Its function is as follows. Snake venom serine protease that may act in the hemostasis system of the prey. The chain is Snake venom serine protease catroxase-1 from Crotalus atrox (Western diamondback rattlesnake).